We begin with the raw amino-acid sequence, 319 residues long: G-protein coupled receptor 171 (319 aa).

The Extracellular segment spans residues 1–21 (MTNSSTFCPVYRDLEPFTYFF). N-linked (GlcNAc...) asparagine glycosylation occurs at N3. A helical transmembrane segment spans residues 22–42 (YLVFLIGIIGSCFATWAFIQK). Residues 43-48 (TTNHRC) are Cytoplasmic-facing. Residues 49-69 (VSIYLINLLTADFLLTLALPV) form a helical membrane-spanning segment. Over 70–89 (KIIVDLGVAPWKLRIFHCQV) the chain is Extracellular. The helical transmembrane segment at 90 to 110 (TACLIYINMYLSIIFLAFVSI) threads the bilayer. The Cytoplasmic segment spans residues 111–132 (DRCLQLIHSCKIYRIQEPGFAK). Residues 133-153 (MISAVVWLMVLLIMVPNMVIP) form a helical membrane-spanning segment. At 154–181 (IKDIKEKSNVGCMEFKKEFGRNWHLLTN) the chain is on the extracellular side. Residues 182-202 (FICVAIFLNFSVIILISNFLA) traverse the membrane as a helical segment. At 203–224 (IRQLYRNRDNTNYPSVKSALLH) the chain is on the cytoplasmic side. Residues 225–245 (ILLVTASYIICFVPYHAVRIP) form a helical membrane-spanning segment. Over 246-268 (YTLSQTEVISDCSTRIALFKAKE) the chain is Extracellular. A helical membrane pass occupies residues 269-289 (ATLLLAVSNLCFDPILYYHLS). Over 290 to 319 (KAFRLKVTETFASPKKSKPLEERLRSENDV) the chain is Cytoplasmic.

It belongs to the G-protein coupled receptor 1 family. In terms of tissue distribution, highly expressed in hypothalamus, including the arcuate nucleus, paraventricular nucleus and dorsomedial hypothalamus. Expressed in periaqueductal gray (at protein level), found primarily in GABAergic neurons and to a lesser extent in glutamatergic neurons. Expressed in T cells and natural killer cells.

It localises to the cell membrane. In terms of biological role, G-protein coupled receptor for Big LEN, a 16-amino acid neuropeptide produced from the precursor protein, proSAAS (encoded by PCSK1N). Acts through a G(i)-alpha-mediated pathway in response to Big LEN. Big LEN-GPR171 system plays an important role in regulating feeding and metabolism. Also plays a role in modulating fear and anxiety-like behaviors in the basolateral amygdala. Big LEN-GPR171 modulates the mu-type opioid receptor signaling and antinociception. Acts as a negative regulator T cell function. In Mus musculus (Mouse), this protein is G-protein coupled receptor 171 (Gpr171).